The following is a 339-amino-acid chain: D-erythrose-4-phosphate dehydrogenase (339 aa).

11–12 (RI) lines the NAD(+) pocket. Substrate is bound by residues 158–160 (SCT), arginine 204, 217–218 (TK), and arginine 240. The active-site Nucleophile is the cysteine 159. Asparagine 322 is an NAD(+) binding site.

It belongs to the glyceraldehyde-3-phosphate dehydrogenase family. Epd subfamily. As to quaternary structure, homotetramer.

It localises to the cytoplasm. The catalysed reaction is D-erythrose 4-phosphate + NAD(+) + H2O = 4-phospho-D-erythronate + NADH + 2 H(+). The protein operates within cofactor biosynthesis; pyridoxine 5'-phosphate biosynthesis; pyridoxine 5'-phosphate from D-erythrose 4-phosphate: step 1/5. Functionally, catalyzes the NAD-dependent conversion of D-erythrose 4-phosphate to 4-phosphoerythronate. The polypeptide is D-erythrose-4-phosphate dehydrogenase (Aliivibrio salmonicida (strain LFI1238) (Vibrio salmonicida (strain LFI1238))).